The primary structure comprises 245 residues: Probable transcriptional regulatory protein Cbei_4222 (245 aa).

It belongs to the TACO1 family.

It is found in the cytoplasm. This chain is Probable transcriptional regulatory protein Cbei_4222, found in Clostridium beijerinckii (strain ATCC 51743 / NCIMB 8052) (Clostridium acetobutylicum).